The sequence spans 109 residues: Globin (109 aa).

Positions 3–109 (PLTAAEVSSL…IFPIAGIHAL (107 aa)) constitute a Globin domain.

The protein belongs to the globin family. As to quaternary structure, monomer.

In terms of biological role, oxygen binding protein. The chain is Globin from Dicrocoelium dendriticum (Small liver fluke).